The sequence spans 493 residues: Alpha-amylase-related protein (493 aa).

Residues M1–A19 form the signal peptide. A Pyrrolidone carboxylic acid modification is found at Q20. Cysteines 47 and 103 form a disulfide. The Ca(2+) site is built by N117, Q168, and D177. An intrachain disulfide couples C156 to C170. Residue R205 participates in chloride binding. Residue D207 is the Nucleophile of the active site. H211 is a binding site for Ca(2+). Catalysis depends on E244, which acts as the Proton donor. Residues N307 and R342 each contribute to the chloride site. 3 disulfide bridges follow: C375–C381, C417–C440, and C447–C459.

This sequence belongs to the glycosyl hydrolase 13 family. Monomer. Requires Ca(2+) as cofactor. Chloride serves as cofactor.

It localises to the secreted. It catalyses the reaction Endohydrolysis of (1-&gt;4)-alpha-D-glucosidic linkages in polysaccharides containing three or more (1-&gt;4)-alpha-linked D-glucose units.. The chain is Alpha-amylase-related protein (Amyrel) from Drosophila teissieri (Fruit fly).